A 148-amino-acid chain; its full sequence is MSGSVLDEEAEKLMDYDYLLEKLYKKVPPKSGTSEYRIPEPQIIRIGSQTVIRNFREIAQALKRDPKLVARYLQKELATAASYEEESGQLILNVKVSRKVVNQFLQLFMKTYVRCPTCGSIDTKLLRQERAYMLKCEACGAEQPVKPI.

This sequence belongs to the eIF-2-beta/eIF-5 family. Heterotrimer composed of an alpha, a beta and a gamma chain.

Its function is as follows. eIF-2 functions in the early steps of protein synthesis by forming a ternary complex with GTP and initiator tRNA. The polypeptide is Translation initiation factor 2 subunit beta (eif2b) (Aeropyrum pernix (strain ATCC 700893 / DSM 11879 / JCM 9820 / NBRC 100138 / K1)).